Here is a 70-residue protein sequence, read N- to C-terminus: MIYKIYYQEHPERNPKRETTISMYIEAESLPQAREIIEENTEYNVEFIEELSDKAVTYEKANPNFEVTTF.

Belongs to the RNA polymerase subunit epsilon family. RNAP is composed of a core of 2 alpha, a beta and a beta' subunit. The core is associated with a delta subunit, and at least one of epsilon or omega. When a sigma factor is associated with the core the holoenzyme is formed, which can initiate transcription.

The enzyme catalyses RNA(n) + a ribonucleoside 5'-triphosphate = RNA(n+1) + diphosphate. Functionally, a non-essential component of RNA polymerase (RNAP). The polypeptide is DNA-directed RNA polymerase subunit epsilon (Leuconostoc mesenteroides subsp. mesenteroides (strain ATCC 8293 / DSM 20343 / BCRC 11652 / CCM 1803 / JCM 6124 / NCDO 523 / NBRC 100496 / NCIMB 8023 / NCTC 12954 / NRRL B-1118 / 37Y)).